The sequence spans 346 residues: Phosphoribosylformylglycinamidine cyclo-ligase (346 aa).

The protein belongs to the AIR synthase family.

The protein resides in the cytoplasm. The catalysed reaction is 2-formamido-N(1)-(5-O-phospho-beta-D-ribosyl)acetamidine + ATP = 5-amino-1-(5-phospho-beta-D-ribosyl)imidazole + ADP + phosphate + H(+). It participates in purine metabolism; IMP biosynthesis via de novo pathway; 5-amino-1-(5-phospho-D-ribosyl)imidazole from N(2)-formyl-N(1)-(5-phospho-D-ribosyl)glycinamide: step 2/2. In Bacillus thuringiensis subsp. konkukian (strain 97-27), this protein is Phosphoribosylformylglycinamidine cyclo-ligase.